The primary structure comprises 178 residues: Fatty-acid and retinol-binding protein 1 (178 aa).

The first 16 residues, 1-16 (MYHQLILMALIGVIMA), serve as a signal peptide directing secretion. N-linked (GlcNAc...) asparagine glycans are attached at residues Asn-44 and Asn-75. Coiled-coil stretches lie at residues 67–89 (DAALEALKNTSDKLYQKAVELRN) and 122–154 (QKLDMEKLKQAARDIIAKYEALNEETREELKAT). Asn-157 carries an N-linked (GlcNAc...) asparagine glycan.

Belongs to the fatty-acid and retinol-binding protein (FARBP) family. N-glycosylated.

It localises to the secreted. In terms of biological role, binds retinol and different fatty acids. The sequence is that of Fatty-acid and retinol-binding protein 1 from Onchocerca dukei (Filarial nematode worm).